We begin with the raw amino-acid sequence, 148 residues long: RxLR effector protein SFI7 (148 aa).

The N-terminal stretch at 1–22 (MRAYFVLLVAATAILTYGGATA) is a signal peptide. Asparagine 32 is a glycosylation site (N-linked (GlcNAc...) asparagine). A RxLR-dEER motif is present at residues 44 to 58 (RSLRVAPSGGNGEER).

The protein belongs to the RxLR effector family.

The protein resides in the secreted. It is found in the host cytoplasm. It localises to the host cell membrane. Its function is as follows. Effector that suppresses flg22-induced post-translational MAP kinase activation in tomato but not in Arabidopsis. The perception of highly conserved pathogen- or microbe-associated molecular patterns (PAMPs/MAMPs), such as flg22, triggers converging signaling pathways recruiting MAP kinase cascades and inducing transcriptional re-programming, yielding a generic antimicrobial response. Also partially attenuates INF1-triggered cell death. This is RxLR effector protein SFI7 from Phytophthora infestans (strain T30-4) (Potato late blight agent).